We begin with the raw amino-acid sequence, 210 residues long: Dephospho-CoA kinase (210 aa).

In terms of domain architecture, DPCK spans 4-202 (WVGLTGGIGS…AFYSGIFASK (199 aa)). 12 to 17 (GSGKSA) contributes to the ATP binding site.

It belongs to the CoaE family.

Its subcellular location is the cytoplasm. The catalysed reaction is 3'-dephospho-CoA + ATP = ADP + CoA + H(+). Its pathway is cofactor biosynthesis; coenzyme A biosynthesis; CoA from (R)-pantothenate: step 5/5. Its function is as follows. Catalyzes the phosphorylation of the 3'-hydroxyl group of dephosphocoenzyme A to form coenzyme A. The polypeptide is Dephospho-CoA kinase (Neisseria meningitidis serogroup A / serotype 4A (strain DSM 15465 / Z2491)).